The following is a 148-amino-acid chain: Cystatin-C (148 aa).

The signal sequence occupies residues 1–28; the sequence is MARSLGVPLLLLAALVVALALAVSPAAG. A Secondary area of contact motif is present at residues 83-87; sequence QIVSG. 2 disulfides stabilise this stretch: C101/C111 and C125/C145.

Belongs to the cystatin family.

It localises to the secreted. Its function is as follows. This is a thiol proteinase inhibitor. This chain is Cystatin-C (CST3), found in Oryctolagus cuniculus (Rabbit).